A 398-amino-acid polypeptide reads, in one-letter code: GATA transcription factor 21 (398 aa).

The interval 20–51 (QPFFYPLGSSSSLHHHHHHHHHQVPSNSSSSS) is disordered. The span at 32–42 (LHHHHHHHHHQ) shows a compositional bias: basic residues. The Nuclear localization signal motif lies at 109–116 (PKKETRLK). The tract at residues 122-144 (KDHEDQPHPLHQNPTKPDSDSDK) is disordered. The segment at 226 to 280 (NGVIRVCSDCNTTKTPLWRSGPRGPKSLCNACGIRQRKARRAAMAAAAAAGDQEV) adopts a GATA-type zinc-finger fold. The segment at 289–353 (LPLKKKLQNK…KSTTSSNSSI (65 aa)) is disordered. Basic residues predominate over residues 291 to 302 (LKKKLQNKKKRS). Residues 343–353 (SKSTTSSNSSI) are compositionally biased toward low complexity.

The protein belongs to the type IV zinc-finger family. Class B subfamily. As to quaternary structure, interacts with SNL1. Forms heterodimers with GATA18. In terms of tissue distribution, expressed predominantly in leaves, and barely in stems, flowers and siliques.

It is found in the nucleus. Transcriptional regulator that specifically binds 5'-GATA-3' or 5'-GAT-3' motifs within gene promoters. Involved in the modulation of chloroplast development, growth and division in a cytokinin-dependent manner. Repressor of the gibberellic acid (GA) signaling pathway that represses flowering and modulates greening, in a SOC1-dependent manner. Prevents the accumulation of SOC1 during flowering. Promotes chlorophyll biosynthesis throughout the plant, by regulating chlorophyll biosynthetic genes (e.g. HEMA1 and GUN4) and chloroplast localized glutamate synthase (e.g. GLU1). Involved in the regulation of sugar-sensing genes (e.g. HXK1, HXK2, STP13 and PLT6). Regulator of germination, senescence, elongation growth and flowering time. Also influences leaf starch content. The sequence is that of GATA transcription factor 21 from Arabidopsis thaliana (Mouse-ear cress).